Here is a 479-residue protein sequence, read N- to C-terminus: Glutamate--tRNA ligase (479 aa).

A 'HIGH' region motif is present at residues 21-31 (PSPTGYLHVGG). Residues 248 to 252 (KLSKR) carry the 'KMSKS' region motif. Lys-251 lines the ATP pocket.

Belongs to the class-I aminoacyl-tRNA synthetase family. Glutamate--tRNA ligase type 1 subfamily. Monomer.

The protein localises to the cytoplasm. The catalysed reaction is tRNA(Glu) + L-glutamate + ATP = L-glutamyl-tRNA(Glu) + AMP + diphosphate. In terms of biological role, catalyzes the attachment of glutamate to tRNA(Glu) in a two-step reaction: glutamate is first activated by ATP to form Glu-AMP and then transferred to the acceptor end of tRNA(Glu). The sequence is that of Glutamate--tRNA ligase from Actinobacillus pleuropneumoniae serotype 5b (strain L20).